Reading from the N-terminus, the 166-residue chain is Podoplanin (166 aa).

The N-terminal stretch at 1–22 (MWTAPVLLWVLGSVWFWDSAQG) is a signal peptide. Over 23–135 (GAIGALEDDL…KKDGLAVVTL (113 aa)) the chain is Extracellular. O-linked (GalNAc...) threonine glycans are attached at residues T34, T52, T55, and T56. Over residues 54–63 (DTTGELDKST) the composition is skewed to basic and acidic residues. Positions 54–124 (DTTGELDKST…DNAGGETQTT (71 aa)) are disordered. An O-linked (GalNAc...) serine glycan is attached at S62. O-linked (GalNAc...) threonine glycans are attached at residues T63, T71, and T80. A glycan (O-linked (GalNAc...) serine) is linked at S81. The O-linked (GalNAc...) threonine glycan is linked to T83. O-linked (GalNAc...) serine glycosylation occurs at S84. Basic and acidic residues predominate over residues 84–93 (SDHDHKEHES). O-linked (GalNAc...) threonine glycans are attached at residues T94, T95, T96, T101, T105, T109, and T110. Residues 94–103 (TTTVKAVTSH) are compositionally biased toward polar residues. The segment covering 104–114 (STDKKTTHPNR) has biased composition (basic and acidic residues). The chain crosses the membrane as a helical span at residues 136-156 (VGIIIGVLLAIGFIGGIIIVV). The interval 137-141 (GIIIG) is requires for dimerization and lipid rafts association. Over 157–166 (MRKISGRFSP) the chain is Cytoplasmic. A requires for interaction with MSN and EZR region spans residues 158–159 (RK).

It belongs to the podoplanin family. Homodimer. Interacts with CLEC1B; the interaction is independent of CLEC1B glycosylation and activates CLEC1B; the interaction is dependent of sialic acid on O-glycans. Interacts with CD9; this interaction is homophilic and attenuates platelet aggregation and pulmonary metastasis induced by PDPN. Interacts with LGALS8; the interaction is glycosylation-dependent; may participate in connection of the lymphatic endothelium to the surrounding extracellular matrix. Interacts with HSPA9. Interacts (via extracellular domain) with CD44; this interaction is required for PDPN-mediated directional migration and regulation of lamellipodia extension/stabilization during cell spreading and migration. Interacts (via cytoplasmic domain) with MSN and EZR; activates RHOA and promotes epithelial-mesenchymal transition. Interacts with CCL21; relocalized PDPN to the basolateral membrane. In terms of processing, extensively O-glycosylated. Contains sialic acid residues. O-glycosylation is necessary for platelet aggregation activity. Disialylated at Thr-52; sialic acid is critical for platelet-aggregating activity and for CLEC1B interaction. The N-terminus is blocked. In terms of tissue distribution, in adult kidney, expressed on the urinary surface and foot processes of podocytes and in parietal epithelial cells of Bowman's capsule where it is localized to luminal surfaces. In lung, expressed exclusively on luminal surfaces of type I alveolar epithelial cells and pleural mesothelial cells. Not expressed in type II alveolar cells. In bone, expressed in osteocytes and osteoblasts. In spleen, liver, stomach and intestine, expressed in mesoepithelium. Also expressed in thymic epithelial cells, choroid plexus and leptomeninges.

It localises to the membrane. Its subcellular location is the cell projection. It is found in the lamellipodium membrane. The protein resides in the filopodium membrane. The protein localises to the microvillus membrane. It localises to the ruffle membrane. Its subcellular location is the membrane raft. It is found in the apical cell membrane. The protein resides in the basolateral cell membrane. The protein localises to the invadopodium. Its function is as follows. Mediates effects on cell migration and adhesion through its different partners. During development plays a role in blood and lymphatic vessels separation by binding CLEC1B, triggering CLEC1B activation in platelets and leading to platelet activation and/or aggregation. Interaction with CD9, on the contrary, attenuates platelet aggregation and pulmonary metastasis induced by PDPN. Mediates effects on cell migration and adhesion through its different partners. Through MSN or EZR interaction promotes epithelial-mesenchymal transition (EMT) leading to ERZ phosphorylation and triggering RHOA activation leading to cell migration increase and invasiveness. Interaction with CD44 promotes directional cell migration in epithelial and tumor cells. In lymph nodes (LNs), controls fibroblastic reticular cells (FRCs) adhesion to the extracellular matrix (ECM) and contraction of the actomyosin by maintaining ERM proteins (EZR; MSN and RDX) and MYL9 activation through association with unknown transmembrane proteins. Engagement of CLEC1B by PDPN promotes FRCs relaxation by blocking lateral membrane interactions leading to reduction of ERM proteins (EZR; MSN and RDX) and MYL9 activation. Through binding with LGALS8 may participate in connection of the lymphatic endothelium to the surrounding extracellular matrix. In keratinocytes, induces changes in cell morphology showing an elongated shape, numerous membrane protrusions, major reorganization of the actin cytoskeleton, increased motility and decreased cell adhesion. Controls invadopodia stability and maturation leading to efficient degradation of the extracellular matrix (ECM) in tumor cells through modulation of RHOC activity in order to activate ROCK1/ROCK2 and LIMK1/LIMK2 and inactivation of CFL1. Required for normal lung cell proliferation and alveolus formation at birth. Does not function as a water channel or as a regulator of aquaporin-type water channels. Does not have any effect on folic acid or amino acid transport. In Rattus norvegicus (Rat), this protein is Podoplanin.